The primary structure comprises 204 residues: Sperm acrosome developmental regulator (204 aa).

At Ser65 the chain carries Phosphoserine. The segment covering 172-184 (RRQERRRRHHLRA) has biased composition (basic residues). The segment at 172-204 (RRQERRRRHHLRAHMGPQPDPAQGLKQDARSPL) is disordered.

It is found in the cytoplasmic vesicle. The protein localises to the secretory vesicle. Its subcellular location is the acrosome. Functionally, may play an important role in acrosome formation and nucleus shaping during spermiogenesis. This is Sperm acrosome developmental regulator (SPACDR) from Bos taurus (Bovine).